Here is a 314-residue protein sequence, read N- to C-terminus: Probable cell division protein WhiA (314 aa).

Positions 274–308 (SLKELGEMVSTGTISKSGVNHRLRKLNELADKIRS) form a DNA-binding region, H-T-H motif.

This sequence belongs to the WhiA family.

Functionally, involved in cell division and chromosome segregation. The polypeptide is Probable cell division protein WhiA (Staphylococcus carnosus (strain TM300)).